A 193-amino-acid polypeptide reads, in one-letter code: Potassium-transporting ATPase KdpC subunit (193 aa).

A helical transmembrane segment spans residues 7–27 (PALVLFAALTLLTGVAYPLAV).

The protein belongs to the KdpC family. The system is composed of three essential subunits: KdpA, KdpB and KdpC.

Its subcellular location is the cell inner membrane. Its function is as follows. Part of the high-affinity ATP-driven potassium transport (or Kdp) system, which catalyzes the hydrolysis of ATP coupled with the electrogenic transport of potassium into the cytoplasm. This subunit acts as a catalytic chaperone that increases the ATP-binding affinity of the ATP-hydrolyzing subunit KdpB by the formation of a transient KdpB/KdpC/ATP ternary complex. The protein is Potassium-transporting ATPase KdpC subunit of Rhodospirillum rubrum (strain ATCC 11170 / ATH 1.1.1 / DSM 467 / LMG 4362 / NCIMB 8255 / S1).